We begin with the raw amino-acid sequence, 420 residues long: Tyrosine--tRNA ligase (420 aa).

An L-tyrosine-binding site is contributed by tyrosine 33. The 'HIGH' region motif lies at 38 to 47 (PTADSLHVGH). Positions 167 and 171 each coordinate L-tyrosine. The 'KMSKS' region signature appears at 227-231 (KFGKT). Lysine 230 is a binding site for ATP. One can recognise an S4 RNA-binding domain in the interval 353–419 (LTVADLLVKV…GKRNYALVKV (67 aa)).

The protein belongs to the class-I aminoacyl-tRNA synthetase family. TyrS type 1 subfamily. As to quaternary structure, homodimer.

The protein resides in the cytoplasm. The catalysed reaction is tRNA(Tyr) + L-tyrosine + ATP = L-tyrosyl-tRNA(Tyr) + AMP + diphosphate + H(+). Its function is as follows. Catalyzes the attachment of tyrosine to tRNA(Tyr) in a two-step reaction: tyrosine is first activated by ATP to form Tyr-AMP and then transferred to the acceptor end of tRNA(Tyr). The polypeptide is Tyrosine--tRNA ligase (Anaeromyxobacter dehalogenans (strain 2CP-C)).